Consider the following 117-residue polypeptide: uncharacterized protein (117 aa).

The next 2 helical transmembrane spans lie at 43 to 63 (APIM…LMLL) and 73 to 93 (AVQH…VFIV).

It is found in the cell membrane. This is an uncharacterized protein from Bacillus subtilis (strain 168).